We begin with the raw amino-acid sequence, 450 residues long: 23S rRNA (uracil(1939)-C(5))-methyltransferase RlmD (450 aa).

The 59-residue stretch at Lys15–Arg73 folds into the TRAM domain. [4Fe-4S] cluster contacts are provided by Cys86, Cys92, Cys95, and Cys173. Residues Gln276, Phe305, Asn310, Glu326, Asn353, and Asp374 each coordinate S-adenosyl-L-methionine. Catalysis depends on Cys400, which acts as the Nucleophile.

Belongs to the class I-like SAM-binding methyltransferase superfamily. RNA M5U methyltransferase family. RlmD subfamily.

It carries out the reaction uridine(1939) in 23S rRNA + S-adenosyl-L-methionine = 5-methyluridine(1939) in 23S rRNA + S-adenosyl-L-homocysteine + H(+). Catalyzes the formation of 5-methyl-uridine at position 1939 (m5U1939) in 23S rRNA. This is 23S rRNA (uracil(1939)-C(5))-methyltransferase RlmD from Pectobacterium atrosepticum (strain SCRI 1043 / ATCC BAA-672) (Erwinia carotovora subsp. atroseptica).